We begin with the raw amino-acid sequence, 45 residues long: uncharacterized protein (45 aa).

This is an uncharacterized protein from Xylella fastidiosa (strain Temecula1 / ATCC 700964).